Here is a 221-residue protein sequence, read N- to C-terminus: tRNA (guanine-N(7)-)-methyltransferase (221 aa).

Residues Glu46, Asp71, and Asp120 each coordinate S-adenosyl-L-methionine. Asp120 is an active-site residue. Substrate is bound at residue Asp156.

Belongs to the class I-like SAM-binding methyltransferase superfamily. TrmB family.

The enzyme catalyses guanosine(46) in tRNA + S-adenosyl-L-methionine = N(7)-methylguanosine(46) in tRNA + S-adenosyl-L-homocysteine. It functions in the pathway tRNA modification; N(7)-methylguanine-tRNA biosynthesis. In terms of biological role, catalyzes the formation of N(7)-methylguanine at position 46 (m7G46) in tRNA. The protein is tRNA (guanine-N(7)-)-methyltransferase of Cytophaga hutchinsonii (strain ATCC 33406 / DSM 1761 / CIP 103989 / NBRC 15051 / NCIMB 9469 / D465).